The primary structure comprises 351 residues: Thiamine-phosphate synthase (351 aa).

The tract at residues Met-1 to Glu-128 is unknown. The thiamine-phosphate synthase stretch occupies residues Ile-129 to Asn-351. Residues Gln-180 to Lys-184 and Asn-212 each bind 4-amino-2-methyl-5-(diphosphooxymethyl)pyrimidine. 2 residues coordinate Mg(2+): Asn-213 and Asp-232. Position 251 (Ser-251) interacts with 4-amino-2-methyl-5-(diphosphooxymethyl)pyrimidine. Thr-277 to Thr-279 provides a ligand contact to 2-[(2R,5Z)-2-carboxy-4-methylthiazol-5(2H)-ylidene]ethyl phosphate. Lys-280 serves as a coordination point for 4-amino-2-methyl-5-(diphosphooxymethyl)pyrimidine. 2-[(2R,5Z)-2-carboxy-4-methylthiazol-5(2H)-ylidene]ethyl phosphate contacts are provided by residues Gly-307 and Val-327–Ser-328.

This sequence belongs to the thiamine-phosphate synthase family.

It catalyses the reaction 2-[(2R,5Z)-2-carboxy-4-methylthiazol-5(2H)-ylidene]ethyl phosphate + 4-amino-2-methyl-5-(diphosphooxymethyl)pyrimidine + 2 H(+) = thiamine phosphate + CO2 + diphosphate. It carries out the reaction 2-(2-carboxy-4-methylthiazol-5-yl)ethyl phosphate + 4-amino-2-methyl-5-(diphosphooxymethyl)pyrimidine + 2 H(+) = thiamine phosphate + CO2 + diphosphate. The catalysed reaction is 4-methyl-5-(2-phosphooxyethyl)-thiazole + 4-amino-2-methyl-5-(diphosphooxymethyl)pyrimidine + H(+) = thiamine phosphate + diphosphate. It participates in cofactor biosynthesis; thiamine diphosphate biosynthesis; thiamine phosphate from 4-amino-2-methyl-5-diphosphomethylpyrimidine and 4-methyl-5-(2-phosphoethyl)-thiazole: step 1/1. In terms of biological role, condenses 4-methyl-5-(beta-hydroxyethyl)thiazole monophosphate (THZ-P) and 2-methyl-4-amino-5-hydroxymethyl pyrimidine pyrophosphate (HMP-PP) to form thiamine monophosphate (TMP). This Prochlorococcus marinus subsp. pastoris (strain CCMP1986 / NIES-2087 / MED4) protein is Thiamine-phosphate synthase.